Consider the following 116-residue polypeptide: Putative iron-sulfur cluster insertion protein ErpA (116 aa).

Residues Cys44, Cys108, and Cys110 each coordinate iron-sulfur cluster.

Belongs to the HesB/IscA family. Homodimer. It depends on iron-sulfur cluster as a cofactor.

Functionally, required for insertion of 4Fe-4S clusters. The protein is Putative iron-sulfur cluster insertion protein ErpA of Thiobacillus denitrificans (strain ATCC 25259 / T1).